Here is a 361-residue protein sequence, read N- to C-terminus: Cytochrome c peroxidase, mitochondrial (361 aa).

The N-terminal 67 residues, 1–67 (MTTAVRLLPS…NWGKAAALAS (67 aa)), are a transit peptide targeting the mitochondrion. Residue His119 is the Proton acceptor of the active site. A Phosphotyrosine modification is found at Tyr220. A heme b-binding site is contributed by His242. The active-site Tryptophan radical intermediate is the Trp258.

This sequence belongs to the peroxidase family. Cytochrome c peroxidase subfamily. As to quaternary structure, forms a one-to-one complex with cytochrome c. Requires heme b as cofactor. Post-translationally, CCP1 precursor is processed by the rhomboid protease PCP1, which cleaves the N-terminal hydrophobic transit peptide. The m-AAA protease (composed of YTA12/RCA1 and YTA10/AFG3) is required for CCP1 maturation: m-AAA protease promotes membrane dislocation of the CCP1 transmembrane segment within the transit peptide to ensure the correct positioning of CCP1 within the membrane bilayer, allowing intramembrane cleavage by PCP1.

The protein localises to the mitochondrion matrix. It is found in the mitochondrion intermembrane space. The catalysed reaction is 2 Fe(II)-[cytochrome c] + H2O2 + 2 H(+) = 2 Fe(III)-[cytochrome c] + 2 H2O. Functionally, destroys radicals which are normally produced within the cells and which are toxic to biological systems. This Saccharomyces cerevisiae (strain ATCC 204508 / S288c) (Baker's yeast) protein is Cytochrome c peroxidase, mitochondrial (CCP1).